The sequence spans 997 residues: MAVAEFVFCWPLFELAIVLLVAPIHAAQRHTASDNPSTYNIGGVLSNSDSEEHFSTTIKHLNFDQQYVPRKVTYYDKTIRMDKNPIKTVFNVCDKLIENRVYAVVVSHEQTSGDLSPAAVSYTSGFYSIPVIGISSRDAAFSDKNIHVSFLRTVPPYYHQADVWLEMLSHFAYTKVIIIHSSDTDGRAILGRFQTTSQTYYDDVDVRATVELIVEFEPKLESFTEHLIDMKTAQSRVYLMYASTEDAQVIFRDAGEYNMTGEGHVWIVTEQALFSNNTPDGVLGLQLEHAHSDKGHIRDSVYVLASAIKEMISNETIAEAPKDCGDSAVNWESGKRLFQYLKSRNITGETGQVAFDDNGDRIYAGYDVINIREQQKKHVVGKFSYDSMRAKMRMRINDSEIIWPGKQRRKPEGIMIPTHLKLLTIEEKPFVYVRRMGDDEFRCEPDERPCPLFNNSDATANEFCCRGYCIDLLIELSKRINFTYDLALSPDGQFGHYILRNSTGAMTLRKEWTGLIGELVNERADMIVAPLTINPERAEYIEFSKPFKYQGITILEKKPSRSSTLVSFLQPFSNTLWILVMVSVHVVALVLYLLDRFSPFGRFKLSHSDSNEEKALNLSSAVWFAWGVLLNSGIGEGTPRSFSARVLGMVWAGFAMIIVASYTANLAAFLVLERPKTKLSGINDARLRNTMENLTCATVKGSSVDMYFRRQVELSNMYRTMEANNYATAEQAIQDVKKGKLMAFIWDSSRLEYEASKDCELVTAGELFGRSGYGIGLQKGSPWTDAVTLAILEFHESGFMEKLDKQWIFHGHVQQNCELFEKTPNTLGLKNMAGVFILVGVGIAGGVGLIIIEVIYKKHQVKKQKRLDIARHAADKWRGTIEKRKTIRASLAMQRQYNVGLNSTHAPGTISLAVDKRRYPRLGQRLGPERAWPGDAADVLRIRRPYELGKPGQSPKVMSANQPGMPMPMLGKTRPQQSVLPPRYSPGYTSDVSHLVV.

An N-terminal signal peptide occupies residues 1-26 (MAVAEFVFCWPLFELAIVLLVAPIHA). Topologically, residues 27–573 (AQRHTASDNP…TLVSFLQPFS (547 aa)) are extracellular. N-linked (GlcNAc...) asparagine glycans are attached at residues N258, N314, N345, N397, N454, N481, and N501. Glycine contacts are provided by residues 530–532 (PLT) and R537. The helical transmembrane segment at 574–594 (NTLWILVMVSVHVVALVLYLL) threads the bilayer. Over 595–651 (DRFSPFGRFKLSHSDSNEEKALNLSSAVWFAWGVLLNSGIGEGTPRSFSARVLGMVW) the chain is Cytoplasmic. Residues 652 to 672 (AGFAMIIVASYTANLAAFLVL) traverse the membrane as a helical segment. At 673 to 831 (ERPKTKLSGI…KTPNTLGLKN (159 aa)) the chain is on the extracellular side. The N-linked (GlcNAc...) asparagine glycan is linked to N693. S703 and D747 together coordinate glycine. A helical membrane pass occupies residues 832–852 (MAGVFILVGVGIAGGVGLIII). Residues 853 to 997 (EVIYKKHQVK…YTSDVSHLVV (145 aa)) lie on the Cytoplasmic side of the membrane. Residues 947 to 997 (ELGKPGQSPKVMSANQPGMPMPMLGKTRPQQSVLPPRYSPGYTSDVSHLVV) are disordered. Over residues 987–997 (GYTSDVSHLVV) the composition is skewed to polar residues.

This sequence belongs to the glutamate-gated ion channel (TC 1.A.10.1) family. Forms a heteromeric NMDA channel with Nmdar2.

The protein localises to the cell membrane. Its subcellular location is the postsynaptic cell membrane. It localises to the postsynaptic density. Its function is as follows. NMDA receptor subtype of glutamate-gated ion channels with high calcium permeability and voltage-dependent sensitivity to magnesium. Mediated by glycine. This protein plays a key role in synaptic plasticity, synaptogenesis, excitotoxicity, memory acquisition and learning. It mediates neuronal functions in glutamate neurotransmission. Is involved in the cell surface targeting of NMDA receptors. Plays a role in associative learning and in long-term memory consolidation. This is Glutamate [NMDA] receptor subunit 1 from Drosophila erecta (Fruit fly).